The following is a 193-amino-acid chain: AP-3 complex subunit sigma-2 (193 aa).

This sequence belongs to the adaptor complexes small subunit family. Adaptor protein complex 3 (AP-3) is a heterotetramer composed of two large adaptins (delta-type subunit AP3D1 and beta-type subunit AP3B1 or AP3B2), a medium adaptin (mu-type subunit AP3M1 or AP3M2) and a small adaptin (sigma-type subunit APS1 or AP3S2). Interacts with AGAP1. AP-3 associates with the BLOC-1 complex.

It localises to the golgi apparatus. The protein resides in the cytoplasmic vesicle membrane. Part of the AP-3 complex, an adaptor-related complex which is not clathrin-associated. The complex is associated with the Golgi region as well as more peripheral structures. It facilitates the budding of vesicles from the Golgi membrane and may be directly involved in trafficking to lysosomes. In concert with the BLOC-1 complex, AP-3 is required to target cargos into vesicles assembled at cell bodies for delivery into neurites and nerve terminals. The sequence is that of AP-3 complex subunit sigma-2 (AP3S2) from Bos taurus (Bovine).